We begin with the raw amino-acid sequence, 159 residues long: S-ribosylhomocysteine lyase 1 (159 aa).

Fe cation is bound by residues His54, His58, and Cys124.

The protein belongs to the LuxS family. As to quaternary structure, homodimer. Requires Fe cation as cofactor.

It carries out the reaction S-(5-deoxy-D-ribos-5-yl)-L-homocysteine = (S)-4,5-dihydroxypentane-2,3-dione + L-homocysteine. In terms of biological role, involved in the synthesis of autoinducer 2 (AI-2) which is secreted by bacteria and is used to communicate both the cell density and the metabolic potential of the environment. The regulation of gene expression in response to changes in cell density is called quorum sensing. Catalyzes the transformation of S-ribosylhomocysteine (RHC) to homocysteine (HC) and 4,5-dihydroxy-2,3-pentadione (DPD). This Lactobacillus delbrueckii subsp. bulgaricus (strain ATCC BAA-365 / Lb-18) protein is S-ribosylhomocysteine lyase 1.